We begin with the raw amino-acid sequence, 571 residues long: Urease subunit alpha (571 aa).

One can recognise a Urease domain in the interval 133-571; sequence GGIDTHVHFI…LPLAQRYFLF (439 aa). Residues His-138, His-140, and Lys-221 each coordinate Ni(2+). Lys-221 is subject to N6-carboxylysine. His-223 contributes to the substrate binding site. His-250 and His-276 together coordinate Ni(2+). The active-site Proton donor is the His-324. Asp-364 contributes to the Ni(2+) binding site.

The protein belongs to the metallo-dependent hydrolases superfamily. Urease alpha subunit family. In terms of assembly, heterotrimer of UreA (gamma), UreB (beta) and UreC (alpha) subunits. Three heterotrimers associate to form the active enzyme. Ni cation serves as cofactor. Post-translationally, carboxylation allows a single lysine to coordinate two nickel ions.

The protein localises to the cytoplasm. It carries out the reaction urea + 2 H2O + H(+) = hydrogencarbonate + 2 NH4(+). It participates in nitrogen metabolism; urea degradation; CO(2) and NH(3) from urea (urease route): step 1/1. The protein is Urease subunit alpha of Staphylococcus carnosus (strain TM300).